The following is a 147-amino-acid chain: D-aminoacyl-tRNA deacylase (147 aa).

Residues 136 to 137 carry the Gly-cisPro motif, important for rejection of L-amino acids motif; the sequence is GP.

It belongs to the DTD family. In terms of assembly, homodimer.

It localises to the cytoplasm. The enzyme catalyses glycyl-tRNA(Ala) + H2O = tRNA(Ala) + glycine + H(+). It catalyses the reaction a D-aminoacyl-tRNA + H2O = a tRNA + a D-alpha-amino acid + H(+). An aminoacyl-tRNA editing enzyme that deacylates mischarged D-aminoacyl-tRNAs. Also deacylates mischarged glycyl-tRNA(Ala), protecting cells against glycine mischarging by AlaRS. Acts via tRNA-based rather than protein-based catalysis; rejects L-amino acids rather than detecting D-amino acids in the active site. By recycling D-aminoacyl-tRNA to D-amino acids and free tRNA molecules, this enzyme counteracts the toxicity associated with the formation of D-aminoacyl-tRNA entities in vivo and helps enforce protein L-homochirality. The protein is D-aminoacyl-tRNA deacylase of Streptococcus pneumoniae (strain Taiwan19F-14).